We begin with the raw amino-acid sequence, 395 residues long: Protein NDRG1 (395 aa).

The interval 325–395 (RSRTGSAASS…NTPKSMEISC (71 aa)) is disordered. Low complexity predominate over residues 326-339 (SRTGSAASSSSQDG). Tandem repeats lie at residues 339-348 (GNRSRSHTNE), 349-358 (GSRSRSHTGD), 359-368 (GNRSRAHTGD), and 369-378 (GNRSRSHTDS). The 4 X 10 AA tandem repeats of G-[NS]-R-S-R-[AS]-H-T-[DGN]-[DES] stretch occupies residues 339–378 (GNRSRSHTNEGSRSRSHTGDGNRSRAHTGDGNRSRSHTDS). Over residues 345–376 (HTNEGSRSRSHTGDGNRSRAHTGDGNRSRSHT) the composition is skewed to basic and acidic residues. Positions 377–389 (DSNNTNSEHNTPK) are enriched in polar residues.

The protein belongs to the NDRG family.

May be involved in pronephros development, after specification of the pronephros. This is Protein NDRG1 from Xenopus tropicalis (Western clawed frog).